The primary structure comprises 57 residues: Small ribosomal subunit protein eS27 (57 aa).

Positions 10, 13, 29, and 32 each coordinate Zn(2+). The C4-type zinc finger occupies 10 to 32; sequence CPDCENEQTVFGKASTEVACAVC.

This sequence belongs to the eukaryotic ribosomal protein eS27 family. In terms of assembly, part of the 30S ribosomal subunit. The cofactor is Zn(2+).

The chain is Small ribosomal subunit protein eS27 from Halobacterium salinarum (strain ATCC 29341 / DSM 671 / R1).